The primary structure comprises 504 residues: Cytochrome P450 2S1 (504 aa).

A heme-binding site is contributed by Cys440.

It belongs to the cytochrome P450 family. It depends on heme as a cofactor. As to expression, expressed at higher levels in extrahepatic tissues including trachea, lung, stomach, small intestine, colon, kidney, breast, placenta and spleen. Expressed in peripheral blood leukocytes. Constitutively expressed in skin (at protein level).

It is found in the endoplasmic reticulum membrane. It localises to the microsome membrane. The enzyme catalyses all-trans-retinoate + reduced [NADPH--hemoprotein reductase] + O2 = all-trans-5,6-epoxyretinoate + oxidized [NADPH--hemoprotein reductase] + H2O + H(+). The catalysed reaction is all-trans-retinoate + reduced [NADPH--hemoprotein reductase] + O2 = all-trans-4-hydroxyretinoate + oxidized [NADPH--hemoprotein reductase] + H2O + H(+). It catalyses the reaction (5S)-hydroperoxy-(6E,8Z,11Z,14Z)-eicosatetraenoate = 5-oxo-(6E,8Z,11Z,14Z)-eicosatetraenoate + H2O. It carries out the reaction (12S)-hydroperoxy-(5Z,8Z,10E,14Z)-eicosatetraenoate = 12-oxo-(5Z,8Z,10E,14Z)-eicosatetraenoate + H2O. The enzyme catalyses (15S)-hydroperoxy-(5Z,8Z,11Z,13E)-eicosatetraenoate = 15-oxo-(5Z,8Z,11Z,13E)-eicosatetraenoate + H2O. The catalysed reaction is prostaglandin H2 = thromboxane A2. It catalyses the reaction prostaglandin H2 = (12S)-hydroxy-(5Z,8E,10E)-heptadecatrienoate + malonaldehyde. It carries out the reaction (13S)-hydroperoxy-(9Z,11E)-octadecadienoate = 13-oxo-(9Z,11E)-octadecadienoate + H2O. Its pathway is lipid metabolism; fatty acid metabolism. In terms of biological role, a cytochrome P450 monooxygenase involved in the metabolism of retinoids and eicosanoids. In epidermis, may contribute to the oxidative metabolism of all-trans-retinoic acid. For this activity, uses molecular oxygen inserting one oxygen atom into a substrate, and reducing the second into a water molecule, with two electrons provided by NADPH via cytochrome P450 reductase (NADPH--hemoprotein reductase). Additionally, displays peroxidase and isomerase activities toward various oxygenated eicosanoids such as prostaglandin H2 (PGH2) and hydroperoxyeicosatetraenoates (HPETEs). Independently of cytochrome P450 reductase, NADPH, and O2, catalyzes the breakdown of PGH2 to hydroxyheptadecatrienoic acid (HHT) and malondialdehyde (MDA), which is known to act as a mediator of DNA damage. In Homo sapiens (Human), this protein is Cytochrome P450 2S1.